Reading from the N-terminus, the 498-residue chain is Type VI secretion system sheath protein TssC1 (498 aa).

In terms of assembly, forms a heterodimer with TssB1. Heterodimers assemble to form the sheath of the T6SS machinery. Interacts with TssA1.

Core component of the H1 type VI (H1-T6SS) secretion system that plays a role in the release of toxins targeting both eukaryotic and prokaryotic species. Forms the sheath of the structure by assembling into tubules together with TssB1 resulting in the stacking of cogwheel-like structures showing predominantly a 12-fold symmetry. The sheath contracts to provide the energy needed for effector delivery. This chain is Type VI secretion system sheath protein TssC1, found in Pseudomonas aeruginosa (strain ATCC 15692 / DSM 22644 / CIP 104116 / JCM 14847 / LMG 12228 / 1C / PRS 101 / PAO1).